The following is a 183-amino-acid chain: ATP synthase subunit delta (183 aa).

Belongs to the ATPase delta chain family. F-type ATPases have 2 components, F(1) - the catalytic core - and F(0) - the membrane proton channel. F(1) has five subunits: alpha(3), beta(3), gamma(1), delta(1), epsilon(1). F(0) has three main subunits: a(1), b(2) and c(10-14). The alpha and beta chains form an alternating ring which encloses part of the gamma chain. F(1) is attached to F(0) by a central stalk formed by the gamma and epsilon chains, while a peripheral stalk is formed by the delta and b chains.

The protein resides in the cell inner membrane. Functionally, f(1)F(0) ATP synthase produces ATP from ADP in the presence of a proton or sodium gradient. F-type ATPases consist of two structural domains, F(1) containing the extramembraneous catalytic core and F(0) containing the membrane proton channel, linked together by a central stalk and a peripheral stalk. During catalysis, ATP synthesis in the catalytic domain of F(1) is coupled via a rotary mechanism of the central stalk subunits to proton translocation. In terms of biological role, this protein is part of the stalk that links CF(0) to CF(1). It either transmits conformational changes from CF(0) to CF(1) or is implicated in proton conduction. The sequence is that of ATP synthase subunit delta from Desulforapulum autotrophicum (strain ATCC 43914 / DSM 3382 / VKM B-1955 / HRM2) (Desulfobacterium autotrophicum).